The chain runs to 160 residues: E3 ubiquitin ligase complex SCF subunit sconC (160 aa).

An interaction with the F-box domain of F-box proteins region spans residues 101–160 (ILAANYLDIKALLDVGCKTVANMIKGKSPEEIRKTFNIQNDFTPEEEDQIRRENEWAEDR).

Belongs to the SKP1 family. In terms of assembly, component of the SCF (SKP1-CUL1-F-box protein) E3 ubiquitin ligase complexes.

It participates in protein modification; protein ubiquitination. Essential component of the SCF (SKP1-CUL1-F-box protein) E3 ubiquitin ligase complexes, which mediate the ubiquitination and subsequent proteasomal degradation of target proteins. Controls sulfur metabolite repression, probably by mediating the inactivation or degradation of the metR transcription factor. This Talaromyces marneffei (strain ATCC 18224 / CBS 334.59 / QM 7333) (Penicillium marneffei) protein is E3 ubiquitin ligase complex SCF subunit sconC (sconC).